The chain runs to 46 residues: Large ribosomal subunit protein bL36 (46 aa).

It belongs to the bacterial ribosomal protein bL36 family.

This Escherichia coli O7:K1 (strain IAI39 / ExPEC) protein is Large ribosomal subunit protein bL36.